A 138-amino-acid chain; its full sequence is Odorant-binding protein 22 (138 aa).

The N-terminal stretch at 1 to 16 (MKVFIAVFALIAVAAA) is a signal peptide. Arg-30 contributes to the (5Z,8Z,11Z,14Z)-eicosatetraenoate binding site. 2 residues coordinate (9Z)-hexadecenoate: Arg-30 and Tyr-61. 2 residues coordinate (9Z,12Z)-octadecadienoate: Arg-30 and Tyr-61. 3 disulfides stabilise this stretch: Cys-33-Cys-64, Cys-60-Cys-113, and Cys-103-Cys-122. Asn-127 carries N-linked (GlcNAc...) asparagine glycosylation.

The protein belongs to the PBP/GOBP family. Monomer in solution. High-level expression in female mouth parts, particularly in the proboscis (at protein level). Moderate-level expression in female antenna (at protein level). Expressed in testis but not in the accessory gland or ejaculatory duct (at protein level). Expressed in spermathecae (at protein level). Female salivary gland. Female chemosensory organs: antenna, palp and proboscis. Not detected in midgut.

It is found in the secreted. Its function is as follows. Involved in modulation of blood-feeding behavior and capacity in female mosquitoes. Required for normal oviposition. Required for normal fecundity and fertility of female and male mosquitoes. Required for normal expression of VGA1 gene, which encodes the egg yolk protein vitellogenin-A1. Involved in regulation of spermatozoa development. Required for normal female longevity when mosquitoes are maintained on regular sugar meal. Binds long chain fatty acids. Functionally, (Microbial infection) Facilitates shedding of dengue virus type 2 particles into mosquito saliva. Does not affect dengue virus type 2 replication or infection prevalence in midgut and salivary glands at 14 days after blood feeding. In terms of biological role, (Microbial infection) Facilitates shedding of Zika virus particles into mosquito saliva. Does not affect Zika virus replication or infection prevalence in midgut and salivary glands at 14 days after blood feeding. The polypeptide is Odorant-binding protein 22 (Aedes aegypti (Yellowfever mosquito)).